The sequence spans 1233 residues: Reverse gyrase 2 (1233 aa).

The RG N-terminal-type zinc finger occupies 1–41 (MNTIPSSNYLSSCPNCGRVISAERLYKGSVCSECLEEDREF). Zn(2+)-binding residues include Cys-13, Cys-16, Cys-31, and Cys-34. ATP is bound by residues Gln-89 and 106–113 (APPGLGKT). The Helicase ATP-binding domain occupies 93 to 296 (IIRVLRKESF…ALMGFRPGSS (204 aa)). The DEAD box signature appears at 212-215 (DDVD). The segment at 606–1233 (QKVKTVLFIV…DIYYEIKSIR (628 aa)) is topoisomerase I. One can recognise a Toprim domain in the interval 610–774 (TVLFIVESPN…NIKRAEFHEV (165 aa)). Glu-616 lines the Mg(2+) pocket. The RG C-terminal-type; atypical zinc finger occupies 691–720 (IKKCINGHQFTDFEQGNQCPKCHTTQIILD). Residues Cys-694, His-698, Cys-709, and Cys-712 each contribute to the Zn(2+) site. Asp-743 contacts Mg(2+). In terms of domain architecture, Topo IA-type catalytic spans 790-1233 (NVNLVKSQIV…DIYYEIKSIR (444 aa)). Residue Tyr-947 is the O-(5'-phospho-DNA)-tyrosine intermediate of the active site.

This sequence in the N-terminal section; belongs to the DEAD box helicase family. DDVD subfamily. It in the C-terminal section; belongs to the type IA topoisomerase family. As to quaternary structure, monomer. It depends on Zn(2+) as a cofactor. Mg(2+) is required as a cofactor.

The protein resides in the cytoplasm. The catalysed reaction is ATP + H2O = ADP + phosphate + H(+). In terms of biological role, modifies the topological state of DNA by introducing positive supercoils in an ATP-dependent process, increasing the linking number in steps of +1. Binds to single-stranded DNA, transiently cleaves and then rejoins the ends, introducing a positive supercoil in the process. The scissile phosphodiester is attacked by the catalytic tyrosine of the enzyme, resulting in the formation of a DNA-(5'-phosphotyrosyl)-enzyme intermediate. Probably involved in rewinding DNA strands in regions of the chromosome that have opened up to allow replication, transcription, DNA repair and/or for DNA protection. The protein is Reverse gyrase 2 of Sulfurisphaera tokodaii (strain DSM 16993 / JCM 10545 / NBRC 100140 / 7) (Sulfolobus tokodaii).